Reading from the N-terminus, the 407-residue chain is BMP-like protein unc-129 (407 aa).

A signal peptide spans 1 to 18 (MRRLPIVLLLSVFSIANC). N-linked (GlcNAc...) asparagine glycosylation is found at N27, N42, and N211. Residues 252-283 (DDREPIKRKNGKKNSLSEEISSEDVWQGFGEE) form a disordered region. An N-linked (GlcNAc...) asparagine glycan is attached at N395.

The protein belongs to the TGF-beta family. In terms of assembly, interacts with netrin receptor unc-5; the interaction is direct.

Its subcellular location is the secreted. The protein localises to the extracellular space. Functionally, required for the migration of axonal growth-cones and distal tip cells (DTC) along the dorsal-ventral axis of the body wall. Acts cell nonautonomously and independently of the classical daf-4, sma-6 or daf-1 TGFbeta receptor signaling. During axon migration, facilitates long-range repulsive guidance of unc-6/netrin by enhancing unc-5-unc-40 signaling at the expense of unc-5 alone signaling, probably through direct interaction with receptor unc-5. Involved in cell-cell contact formation in sensory rays in the developing male tail, via a pathway involving plx-2 and mab-20/semaphorin-2A. The protein is BMP-like protein unc-129 of Caenorhabditis elegans.